The primary structure comprises 168 residues: Leukotoxin-activating lysine-acyltransferase LtxC (168 aa).

Catalysis depends on residues His-23 and Asp-92.

It belongs to the RTX toxin acyltransferase family.

It localises to the cytoplasm. The enzyme catalyses a fatty acyl-[ACP] + L-lysyl-[protein] = N(6)-(fatty acyl)-L-lysyl-[protein] + holo-[ACP] + H(+). In terms of biological role, required for full activity and modification of the LtxA leukotoxin. Involved in fatty acid modification of the protoxin at two internal lysine residues, thereby converting it to the active toxin. This is Leukotoxin-activating lysine-acyltransferase LtxC from Aggregatibacter actinomycetemcomitans (Actinobacillus actinomycetemcomitans).